The primary structure comprises 154 residues: MGLSDGEWQLVLNVWGKVEADIPGHGQEVLIRLFKDHPETLEKFDKFKHLKSEDEMKSSEDLKKHGTTVLTALGGILKKKGQHEAQLAPLAQSHANKHKIPVKYLEFISEAIIQVLKSKHAGDFGADAQGAMSKALELFRNDIAAKYKELGFQG.

The Globin domain occupies 2–148 (GLSDGEWQLV…FRNDIAAKYK (147 aa)). Ser4 is subject to Phosphoserine. Residue His65 participates in nitrite binding. An O2-binding site is contributed by His65. The residue at position 68 (Thr68) is a Phosphothreonine. Position 94 (His94) interacts with heme b.

Belongs to the globin family. In terms of assembly, monomeric.

Its subcellular location is the cytoplasm. The protein resides in the sarcoplasm. It catalyses the reaction Fe(III)-heme b-[protein] + nitric oxide + H2O = Fe(II)-heme b-[protein] + nitrite + 2 H(+). The catalysed reaction is H2O2 + AH2 = A + 2 H2O. Functionally, monomeric heme protein which primary function is to store oxygen and facilitate its diffusion within muscle tissues. Reversibly binds oxygen through a pentacoordinated heme iron and enables its timely and efficient release as needed during periods of heightened demand. Depending on the oxidative conditions of tissues and cells, and in addition to its ability to bind oxygen, it also has a nitrite reductase activity whereby it regulates the production of bioactive nitric oxide. Under stress conditions, like hypoxia and anoxia, it also protects cells against reactive oxygen species thanks to its pseudoperoxidase activity. The protein is Myoglobin (MB) of Erinaceus europaeus (Western European hedgehog).